Here is a 155-residue protein sequence, read N- to C-terminus: 6,7-dimethyl-8-ribityllumazine synthase (155 aa).

Residues F24, 58–60 (AFE), and 82–84 (AII) contribute to the 5-amino-6-(D-ribitylamino)uracil site. Residue 87–88 (ST) participates in (2S)-2-hydroxy-3-oxobutyl phosphate binding. H90 (proton donor) is an active-site residue. Residue F115 participates in 5-amino-6-(D-ribitylamino)uracil binding. R129 lines the (2S)-2-hydroxy-3-oxobutyl phosphate pocket.

This sequence belongs to the DMRL synthase family.

The catalysed reaction is (2S)-2-hydroxy-3-oxobutyl phosphate + 5-amino-6-(D-ribitylamino)uracil = 6,7-dimethyl-8-(1-D-ribityl)lumazine + phosphate + 2 H2O + H(+). Its pathway is cofactor biosynthesis; riboflavin biosynthesis; riboflavin from 2-hydroxy-3-oxobutyl phosphate and 5-amino-6-(D-ribitylamino)uracil: step 1/2. Catalyzes the formation of 6,7-dimethyl-8-ribityllumazine by condensation of 5-amino-6-(D-ribitylamino)uracil with 3,4-dihydroxy-2-butanone 4-phosphate. This is the penultimate step in the biosynthesis of riboflavin. The protein is 6,7-dimethyl-8-ribityllumazine synthase of Chlorobium luteolum (strain DSM 273 / BCRC 81028 / 2530) (Pelodictyon luteolum).